Here is a 340-residue protein sequence, read N- to C-terminus: Sideroflexin-5 (340 aa).

4 helical membrane passes run 103–123, 163–183, 254–274, and 287–307; these read IFMP…VVGL, FIQG…GLNV, LTRV…MSML, and LLPV…PLAI.

Belongs to the sideroflexin family. Primarily expressed in the brain.

It is found in the mitochondrion inner membrane. The enzyme catalyses citrate(in) = citrate(out). In terms of biological role, mitochondrial amino-acid transporter. Transports citrate. Does not act as a serine transporter: not able to mediate transport of serine into mitochondria. In brown adipose tissue, plays a role in the regulation of UCP1-dependent thermogenesis probably by supporting mitochondrial glycerol-3-phosphate utilization. The polypeptide is Sideroflexin-5 (Homo sapiens (Human)).